A 612-amino-acid chain; its full sequence is MPEAPKKESLEVFDLTLDQKNKQKLQLIEELTSNADQVQRQVLEEILTRNADVEYLRRHDLNGRTDRETFKNIMPVITYEDIEPEINRIANGDKSPILSSKPISEFLTSSGTSGGERKLMPTIEEELDRRSLLYSLLMPVMSQFVPGLENGKGMYFLFIKSESKTPGGLPARPVLTSYYKSSHFKERPYDPYTNYTSPNETILCSDSYQSMYSQMLCGLCQHQEVLRVGAVFASGFIRAIKFLEKHWIELVRDIRTGTLSSLITDPSVREAVAKILKPSPKLADFVEFECKKSSWQGIITRLWPNTKYVDVIVTGTMSQYIPTLDYYSNGLPLVCTMYASSECYFGVNLRPLCKPSEVSYTLIPSMAYFEFLPVHRNNGVTNSINLPKALTEKEQQELVDLVDVKLGQEYELVVTTYAGLCRYRVGDLLRVTGFKNKAPQFSFICRKNVVLSIDSDKTDEVELQNAVKNAVTHLVPFDASLSEYTSYADTSSIPGHYVLFWELCLDGNTPIPPSVFEDCCLAVEESFNTVYRQGRVSDKSIGPLEIKIVEPGTFDKLMDYAISLGASINQYKTPRCVKFAPIIELLNSRVVDSYFSPKCPKWVPGHKQWGSN.

Belongs to the IAA-amido conjugating enzyme family.

In terms of biological role, catalyzes the synthesis of indole-3-acetic acid (IAA)-amino acid conjugates, providing a mechanism for the plant to cope with the presence of excess auxin. Strongly reactive with Glu, Gln, Trp, Asp, Ala, Leu, Phe, Gly, Tyr, Met, Ile and Val. Little or no product formation with His, Ser, Thr, Arg, Lys, or Cys. Also active on pyruvic and butyric acid analogs of IAA, PAA and the synthetic auxin naphthaleneacetic acid (NAA). The two chlorinated synthetic auxin herbicides 2,4-D and 3,6-dichloro-o-anisic acid (dicamba) cannot be used as substrates. The protein is Indole-3-acetic acid-amido synthetase GH3.5 (GH3.5) of Arabidopsis thaliana (Mouse-ear cress).